Consider the following 207-residue polypeptide: Sodium/potassium-transporting ATPase subunit beta-1-interacting protein 1 (207 aa).

Positions 1-21 (MGKCSGRCTLVAFCCLQLVAA) are cleaved as a signal peptide. Topologically, residues 22 to 34 (LERQIFDFLGYQW) are extracellular. Residues 35-55 (APILANFLHIMAVILGIFGTV) traverse the membrane as a helical segment. Over 56 to 61 (QYRSRY) the chain is Cytoplasmic. A helical membrane pass occupies residues 62–82 (LILYAAWLVLWVGWNAFIICF). The Extracellular segment spans residues 83-146 (YLEVGQLSQD…GCLLDYPYIE (64 aa)). The N-linked (GlcNAc...) asparagine glycan is linked to Asn100. A helical membrane pass occupies residues 147 to 167 (ALSSALQIFLALFGFVFACYV). Residues 168 to 207 (SKVFLEEEDSFDFIGGFDSYGYQAPQKTSHLQLQPLYTSG) lie on the Cytoplasmic side of the membrane.

The protein belongs to the NKAIN family. In terms of assembly, interacts with ATP1B1 C-terminus.

Its subcellular location is the cell membrane. This Homo sapiens (Human) protein is Sodium/potassium-transporting ATPase subunit beta-1-interacting protein 1 (NKAIN1).